The primary structure comprises 159 residues: Transcription elongation factor A protein-like 1 (159 aa).

The interval 1–121 (MDKPRKENEE…QFKGDIHGRN (121 aa)) is disordered. Positions 17–34 (KTDEERPPVEHSPEKQSP) are enriched in basic and acidic residues. A compositionally biased stretch (acidic residues) spans 37 to 54 (QSSEEQSSEEEFFPEELL). Composition is skewed to basic and acidic residues over residues 64–80 (SEERPPQEGLSRKDLFE) and 95–119 (HKLEEGSFKERLARSRPQFKGDIHG).

Belongs to the TFS-II family. TFA subfamily.

It is found in the nucleus. May be involved in transcriptional regulation. Modulates various viral and cellular promoters in a promoter context-dependent manner. Does not bind DNA directly. The sequence is that of Transcription elongation factor A protein-like 1 from Gorilla gorilla gorilla (Western lowland gorilla).